Here is a 261-residue protein sequence, read N- to C-terminus: Cytochrome c oxidase subunit 3 (261 aa).

Topologically, residues 1-15 (MAHQAHAYHMVDPSP) are mitochondrial matrix. Residues 16 to 34 (WPLTGAIGALFLTSGLAIW) form a helical membrane-spanning segment. At 35–40 (FHFQSV) the chain is on the mitochondrial intermembrane side. A helical membrane pass occupies residues 41-66 (TLLTLGLILLLLTMYQWWRDIIREGT). At 67–72 (FQGHHT) the chain is on the mitochondrial matrix side. Residues 73-105 (PPVQKGLRYGMILFITSEVFFFLGFFWAFYHSS) form a helical membrane-spanning segment. Topologically, residues 106–128 (LAPTPELGGCWPPTGITPLDPFE) are mitochondrial intermembrane. Residues 129–152 (VPLLNTAVLLASGVTVTWAHHSLM) form a helical membrane-spanning segment. Over 153–155 (EGA) the chain is Mitochondrial matrix. A helical membrane pass occupies residues 156-183 (RKQAIQALALTIILGVYFTALQAMEYYE). Over 184–190 (APFTIAD) the chain is Mitochondrial intermembrane. A helical membrane pass occupies residues 191 to 223 (GVYGSTFFVATGFHGLHVIIGSSFLAVCLLRQI). At 224–232 (QYHFTSEHH) the chain is on the mitochondrial matrix side. Residues 233 to 256 (FGFEAAAWYWHFVDVVWLFLYVSI) traverse the membrane as a helical segment. Topologically, residues 257 to 261 (YWWGS) are mitochondrial intermembrane.

This sequence belongs to the cytochrome c oxidase subunit 3 family. In terms of assembly, component of the cytochrome c oxidase (complex IV, CIV), a multisubunit enzyme composed of 14 subunits. The complex is composed of a catalytic core of 3 subunits MT-CO1, MT-CO2 and MT-CO3, encoded in the mitochondrial DNA, and 11 supernumerary subunits COX4I, COX5A, COX5B, COX6A, COX6B, COX6C, COX7A, COX7B, COX7C, COX8 and NDUFA4, which are encoded in the nuclear genome. The complex exists as a monomer or a dimer and forms supercomplexes (SCs) in the inner mitochondrial membrane with NADH-ubiquinone oxidoreductase (complex I, CI) and ubiquinol-cytochrome c oxidoreductase (cytochrome b-c1 complex, complex III, CIII), resulting in different assemblies (supercomplex SCI(1)III(2)IV(1) and megacomplex MCI(2)III(2)IV(2)).

Its subcellular location is the mitochondrion inner membrane. The enzyme catalyses 4 Fe(II)-[cytochrome c] + O2 + 8 H(+)(in) = 4 Fe(III)-[cytochrome c] + 2 H2O + 4 H(+)(out). Its function is as follows. Component of the cytochrome c oxidase, the last enzyme in the mitochondrial electron transport chain which drives oxidative phosphorylation. The respiratory chain contains 3 multisubunit complexes succinate dehydrogenase (complex II, CII), ubiquinol-cytochrome c oxidoreductase (cytochrome b-c1 complex, complex III, CIII) and cytochrome c oxidase (complex IV, CIV), that cooperate to transfer electrons derived from NADH and succinate to molecular oxygen, creating an electrochemical gradient over the inner membrane that drives transmembrane transport and the ATP synthase. Cytochrome c oxidase is the component of the respiratory chain that catalyzes the reduction of oxygen to water. Electrons originating from reduced cytochrome c in the intermembrane space (IMS) are transferred via the dinuclear copper A center (CU(A)) of subunit 2 and heme A of subunit 1 to the active site in subunit 1, a binuclear center (BNC) formed by heme A3 and copper B (CU(B)). The BNC reduces molecular oxygen to 2 water molecules using 4 electrons from cytochrome c in the IMS and 4 protons from the mitochondrial matrix. In Formosania lacustris (Oriental stream loach), this protein is Cytochrome c oxidase subunit 3 (mt-co3).